The chain runs to 200 residues: Phospholipase A2 inhibitor 1 (200 aa).

Positions 1 to 19 (MKSLHIICLLFIFVARGNS) are cleaved as a signal peptide. 8 disulfides stabilise this stretch: cysteine 22-cysteine 46, cysteine 25-cysteine 32, cysteine 39-cysteine 67, cysteine 73-cysteine 94, cysteine 95-cysteine 100, cysteine 118-cysteine 143, cysteine 136-cysteine 165, and cysteine 169-cysteine 191. Residue asparagine 176 is glycosylated (N-linked (GlcNAc...) asparagine).

This sequence belongs to the CNF-like-inhibitor family. Occurs as a mixture of oligomers. Tetrameric arrangement appears to be the predominant quaternary structure. In terms of processing, N-glycosylated. In terms of tissue distribution, expressed by the liver.

It is found in the secreted. Inhibits basic phospholipase A2 isozymes PLA-B, BP-I and BP-II. In Protobothrops flavoviridis (Habu), this protein is Phospholipase A2 inhibitor 1.